A 446-amino-acid polypeptide reads, in one-letter code: Sensor-type histidine kinase PrrB (446 aa).

Transmembrane regions (helical) follow at residues 19 to 39 (VVATAIGAAIPVLIVGTVVWV) and 151 to 171 (LLICGFAIAAAAVFAWLLAAF). Positions 172 to 222 (AVRPFKQLAQQTRSVDAGGEAPRVEVHGATEAVEIAEAMRGMLQRIWNEQN) constitute an HAMP domain. Residues 237 to 446 (VSSHELRTPL…RLLLRISAPS (210 aa)) enclose the Histidine kinase domain. The residue at position 240 (histidine 240) is a Phosphohistidine; by autocatalysis.

In terms of processing, autophosphorylated.

The protein resides in the cell membrane. It catalyses the reaction ATP + protein L-histidine = ADP + protein N-phospho-L-histidine.. Member of the two-component regulatory system PrrB/PrrA that is involved specifically in early intracellular multiplication of Mycobacterium and is essential for its viability. Functions as a sensor protein kinase which is autophosphorylated at a histidine residue and transfers its phosphate group to the conserved aspartic acid residue in the regulatory domain of PrrA. In turn, PrrA binds to the upstream promoter regions of target genes including itself to positively regulate their expression. This Mycobacterium leprae (strain TN) protein is Sensor-type histidine kinase PrrB (prrB).